The primary structure comprises 479 residues: Ribosomal RNA small subunit methyltransferase F (479 aa).

S-adenosyl-L-methionine is bound by residues 125–131, glutamate 149, aspartate 176, and aspartate 194; that span reads AAAPGSK. Catalysis depends on cysteine 247, which acts as the Nucleophile.

It belongs to the class I-like SAM-binding methyltransferase superfamily. RsmB/NOP family.

It is found in the cytoplasm. The catalysed reaction is cytidine(1407) in 16S rRNA + S-adenosyl-L-methionine = 5-methylcytidine(1407) in 16S rRNA + S-adenosyl-L-homocysteine + H(+). Functionally, specifically methylates the cytosine at position 1407 (m5C1407) of 16S rRNA. The protein is Ribosomal RNA small subunit methyltransferase F of Salmonella paratyphi B (strain ATCC BAA-1250 / SPB7).